A 495-amino-acid polypeptide reads, in one-letter code: Growth/differentiation factor 5 (495 aa).

The signal sequence occupies residues 1-27 (MRLPKLLTLLLWHLAWLDLELICTVLG). Positions 28–375 (APDLGQRTPG…YLFSQRRKRR (348 aa)) are excised as a propeptide. The interval 30–162 (DLGQRTPGAK…KEPFRPPPIT (133 aa)) is disordered. Over residues 124–137 (GGKASSKAGSAPSS) the composition is skewed to low complexity. Over residues 142–156 (KTREPGTPREPKEPF) the composition is skewed to basic and acidic residues. A glycan (N-linked (GlcNAc...) asparagine) is linked at Asn183. 3 disulfide bridges follow: Cys394/Cys460, Cys423/Cys492, and Cys427/Cys494.

The protein belongs to the TGF-beta family. As to quaternary structure, homodimer; disulfide-linked. Interacts with serine proteases, HTRA1 and HTRA3. Following LPS binding, may form a complex with CXCR4, HSP90AA1 and HSPA8. Interacts with high affinity with NOG; inhibits chondrogenesis. Interacts with high affinity with BMPR1B and lower affinity with BMPR1A; positively regulates chondrocyte differentiation and induces SMAD-dependent signaling. Interacts with FBN1 (via N-terminal domain) and FBN2. Interacts with TGFBR3.

The protein localises to the secreted. It localises to the cell membrane. Growth factor involved in bone and cartilage formation. During cartilage development regulates differentiation of chondrogenic tissue through two pathways. Firstly, positively regulates differentiation of chondrogenic tissue through its binding of high affinity with BMPR1B and of less affinity with BMPR1A, leading to induction of SMAD1-SMAD5-SMAD8 complex phosphorylation and then SMAD protein signaling transduction. Secondly, negatively regulates chondrogenic differentiation through its interaction with NOG. Required to prevent excessive muscle loss upon denervation. This function requires SMAD4 and is mediated by phosphorylated SMAD1/5/8. Binds bacterial lipopolysaccharide (LPS) and mediates LPS-induced inflammatory response, including TNF secretion by monocytes. The protein is Growth/differentiation factor 5 (Gdf5) of Mus musculus (Mouse).